Reading from the N-terminus, the 178-residue chain is ATP synthase subunit delta (178 aa).

It belongs to the ATPase delta chain family. In terms of assembly, F-type ATPases have 2 components, F(1) - the catalytic core - and F(0) - the membrane proton channel. F(1) has five subunits: alpha(3), beta(3), gamma(1), delta(1), epsilon(1). F(0) has three main subunits: a(1), b(2) and c(10-14). The alpha and beta chains form an alternating ring which encloses part of the gamma chain. F(1) is attached to F(0) by a central stalk formed by the gamma and epsilon chains, while a peripheral stalk is formed by the delta and b chains.

The protein localises to the cell membrane. Its function is as follows. F(1)F(0) ATP synthase produces ATP from ADP in the presence of a proton or sodium gradient. F-type ATPases consist of two structural domains, F(1) containing the extramembraneous catalytic core and F(0) containing the membrane proton channel, linked together by a central stalk and a peripheral stalk. During catalysis, ATP synthesis in the catalytic domain of F(1) is coupled via a rotary mechanism of the central stalk subunits to proton translocation. This protein is part of the stalk that links CF(0) to CF(1). It either transmits conformational changes from CF(0) to CF(1) or is implicated in proton conduction. This Streptococcus agalactiae serotype V (strain ATCC BAA-611 / 2603 V/R) protein is ATP synthase subunit delta.